We begin with the raw amino-acid sequence, 184 residues long: Photosystem I assembly protein Ycf4 (184 aa).

Transmembrane regions (helical) follow at residues 19 to 39 and 64 to 84; these read ISNF…VLVG and LVMS…WCTI.

It belongs to the Ycf4 family.

It localises to the plastid. Its subcellular location is the chloroplast thylakoid membrane. In terms of biological role, seems to be required for the assembly of the photosystem I complex. In Oenothera elata subsp. hookeri (Hooker's evening primrose), this protein is Photosystem I assembly protein Ycf4.